A 301-amino-acid polypeptide reads, in one-letter code: UDP-N-acetylenolpyruvoylglucosamine reductase (301 aa).

Residues 30-194 enclose the FAD-binding PCMH-type domain; that stretch reads VGGEADYLVF…LSVKFALAPG (165 aa). The active site involves Arg-173. The active-site Proton donor is Ser-223. The active site involves Glu-293.

This sequence belongs to the MurB family. It depends on FAD as a cofactor.

The protein resides in the cytoplasm. It catalyses the reaction UDP-N-acetyl-alpha-D-muramate + NADP(+) = UDP-N-acetyl-3-O-(1-carboxyvinyl)-alpha-D-glucosamine + NADPH + H(+). It participates in cell wall biogenesis; peptidoglycan biosynthesis. Functionally, cell wall formation. The protein is UDP-N-acetylenolpyruvoylglucosamine reductase of Streptococcus pneumoniae (strain JJA).